An 88-amino-acid polypeptide reads, in one-letter code: Putative sulfur carrier protein AF_0552 (88 aa).

It belongs to the sulfur carrier protein CysO family.

The protein is Putative sulfur carrier protein AF_0552 of Archaeoglobus fulgidus (strain ATCC 49558 / DSM 4304 / JCM 9628 / NBRC 100126 / VC-16).